The following is a 749-amino-acid chain: ATP-dependent zinc metalloprotease FtsH 3 (749 aa).

Residues 1–17 are compositionally biased toward basic and acidic residues; it reads MTGDPPERRSNGDRLPA. Positions 1-67 are disordered; it reads MTGDPPERRS…GRNGGGMRPF (67 aa). At 1-75 the chain is on the cytoplasmic side; it reads MTGDPPERRS…PFRFPGGRWG (75 aa). Residues 76–96 form a helical membrane-spanning segment; sequence ILVFILVLLGLNWWISSNALA. Residues 97 to 186 are Extracellular-facing; sequence PSERVRVPYS…NASPADNGPS (90 aa). A helical transmembrane segment spans residues 187–207; it reads LLVSILLGFGPVILIIALFVF. The Cytoplasmic segment spans residues 208 to 749; sequence LSRRMAGAAG…LGGSVRAGDA (542 aa). Residue 281 to 288 participates in ATP binding; it reads GQPGTGKT. Histidine 504 is a Zn(2+) binding site. Glutamate 505 is a catalytic residue. Histidine 508 and aspartate 580 together coordinate Zn(2+). Residues 679 to 689 show a composition bias toward basic and acidic residues; that stretch reads GLEHMRPERVE. A disordered region spans residues 679 to 749; sequence GLEHMRPERV…LGGSVRAGDA (71 aa).

The protein in the central section; belongs to the AAA ATPase family. It in the C-terminal section; belongs to the peptidase M41 family. In terms of assembly, homohexamer. It depends on Zn(2+) as a cofactor.

It localises to the cell membrane. Acts as a processive, ATP-dependent zinc metallopeptidase for both cytoplasmic and membrane proteins. Plays a role in the quality control of integral membrane proteins. This chain is ATP-dependent zinc metalloprotease FtsH 3, found in Conexibacter woesei (strain DSM 14684 / CCUG 47730 / CIP 108061 / JCM 11494 / NBRC 100937 / ID131577).